A 98-amino-acid polypeptide reads, in one-letter code: Conotoxin Di19A (98 aa).

Positions 1-19 are cleaved as a signal peptide; it reads MSTLGILLPIALLLPLANP. A propeptide spanning residues 20 to 49 is cleaved from the precursor; the sequence is AENGDGQAMPRTRNLRSLSFGRTLRRLEKR. Pro-53 carries the 4-hydroxyproline modification. A 4-carboxyglutamate modification is found at Glu-63. Residues Pro-68, Pro-93, and Pro-97 each carry the 4-hydroxyproline modification.

Post-translationally, contains 5 disulfide bonds. In terms of tissue distribution, expressed by the venom duct.

The protein localises to the secreted. Its function is as follows. Injection of the synthetic peptide causes a hyperexcitable phenotype in mice greater than three weeks of age at lower doses, and lethargy at higher doses. This is Conotoxin Di19A from Conus distans (Distant cone).